The following is a 202-amino-acid chain: Putative 3-methyladenine DNA glycosylase (202 aa).

The protein belongs to the DNA glycosylase MPG family.

The polypeptide is Putative 3-methyladenine DNA glycosylase (Staphylococcus aureus (strain Mu3 / ATCC 700698)).